The chain runs to 426 residues: MHDIRQIRDNPEAFDAALARRGHEPVAAEILALDEQCRAVTTKMQEAQSRRNEASKAIGQAMGQGNTEKAEALKAEVADLKQTLPRLEDEDRELKMRLENALAVIPNLPLDDVPDGADESDNIEVGTWGTKREFSFEPREHADIGPALGMDFETGARLSGARFTFLRGGMARLHRALGQFMLDRQVSEYGYAECAPPVLVRDEAMYGTDKLPKFAEDSFQTTDGRWLIPTAEVSLTASVMDQILDDAALPMRLTALTPCFRSEAGAAGKDTRGFIRQHQFEKCELVSIVRPENSAAEHERMTEAAESVLQALDLPYRKMLLCTGDMGFGARKTYDLEVWLPGQGAYREISSCSNTGDFQARRMNARYRPEGEKKTAFVHTLNGSGLAVGRTLVAVIENYQEEDGSVAVPEVLAPYMGGAMKLEPTP.

230 to 232 is an L-serine binding site; it reads TAE. Residue 261 to 263 coordinates ATP; that stretch reads RSE. An L-serine-binding site is contributed by E284. 348-351 contributes to the ATP binding site; sequence EISS. S384 serves as a coordination point for L-serine.

The protein belongs to the class-II aminoacyl-tRNA synthetase family. Type-1 seryl-tRNA synthetase subfamily. Homodimer. The tRNA molecule binds across the dimer.

The protein localises to the cytoplasm. The enzyme catalyses tRNA(Ser) + L-serine + ATP = L-seryl-tRNA(Ser) + AMP + diphosphate + H(+). It catalyses the reaction tRNA(Sec) + L-serine + ATP = L-seryl-tRNA(Sec) + AMP + diphosphate + H(+). Its pathway is aminoacyl-tRNA biosynthesis; selenocysteinyl-tRNA(Sec) biosynthesis; L-seryl-tRNA(Sec) from L-serine and tRNA(Sec): step 1/1. In terms of biological role, catalyzes the attachment of serine to tRNA(Ser). Is also able to aminoacylate tRNA(Sec) with serine, to form the misacylated tRNA L-seryl-tRNA(Sec), which will be further converted into selenocysteinyl-tRNA(Sec). This chain is Serine--tRNA ligase, found in Erythrobacter litoralis (strain HTCC2594).